Here is a 122-residue protein sequence, read N- to C-terminus: Glycine cleavage system H protein (122 aa).

The region spanning 22–103 (IGIIGISDYA…AFGSWFFKVE (82 aa)) is the Lipoyl-binding domain. An N6-lipoyllysine modification is found at K63.

The protein belongs to the GcvH family. As to quaternary structure, the glycine cleavage system is composed of four proteins: P, T, L and H. It depends on (R)-lipoate as a cofactor.

Its function is as follows. The glycine cleavage system catalyzes the degradation of glycine. The H protein shuttles the methylamine group of glycine from the P protein to the T protein. This Treponema denticola (strain ATCC 35405 / DSM 14222 / CIP 103919 / JCM 8153 / KCTC 15104) protein is Glycine cleavage system H protein.